Here is a 515-residue protein sequence, read N- to C-terminus: Bifunctional solanapyrone synthase (515 aa).

The N-terminal stretch at 1 to 25 is a signal peptide; sequence MRLIILNLLSLGITPSVVGHSGPHR. N-linked (GlcNAc...) asparagine glycosylation is present at Asn-66. The 171-residue stretch at 91–261 folds into the FAD-binding PCMH-type domain; sequence APKNPACIYT…THIVQRTYPL (171 aa). The residue at position 128 (His-128) is a Pros-8alpha-FAD histidine. 2 N-linked (GlcNAc...) asparagine glycosylation sites follow: Asn-274 and Asn-355.

It belongs to the oxygen-dependent FAD-linked oxidoreductase family. FAD is required as a cofactor.

The catalysed reaction is prosolanapyrone II + O2 = prosolanapyrone III + H2O2. The enzyme catalyses prosolanapyrone III = (-)-solanapyrone A. It carries out the reaction prosolanapyrone III = solanapyrone D. It participates in phytotoxin biosynthesis. In terms of biological role, bifunctional solanapyrone synthase; part of the gene cluster that mediates the biosynthesis of the phytotoxin solanapyrone, a causal agent of early blight disease of potato and tomato. The prosolanapyrone synthase sol1 is a polyketide synthase that produces the octaketide desmethylprosolanapyrone I via sequential condensations of 7 malonyl-CoA units with one acetyl-CoA unit, and one methylation step. The octaketide backbone is further methylated by the sol2 O-methyltransferase to yield prosolanapyrone I. Prosolanapyrone I is hydroxylated to prosolanapyrone II by the cytochrome P450 monooxygenase sol6. The solanapyrone synthase sol5 then catalyzes the oxidation of prosolanapyrone II and the subsequent Diels Alder cycloisomerization of the product prosolanapyrone III to solanapyrones A and D. Solanapyrones A and D are then converted into solanapyrones B and E, respectively, by the sol3 dehydrogenase. The protein is Bifunctional solanapyrone synthase (sol5) of Alternaria solani.